A 301-amino-acid polypeptide reads, in one-letter code: Aspartate carbamoyltransferase catalytic subunit (301 aa).

Residues Arg46 and Thr47 each contribute to the carbamoyl phosphate site. Lys74 lines the L-aspartate pocket. The carbamoyl phosphate site is built by Arg96, His124, and Gln127. 2 residues coordinate L-aspartate: Arg157 and Arg208. Ala249 and Pro250 together coordinate carbamoyl phosphate.

It belongs to the aspartate/ornithine carbamoyltransferase superfamily. ATCase family. Heterododecamer (2C3:3R2) of six catalytic PyrB chains organized as two trimers (C3), and six regulatory PyrI chains organized as three dimers (R2).

It catalyses the reaction carbamoyl phosphate + L-aspartate = N-carbamoyl-L-aspartate + phosphate + H(+). It participates in pyrimidine metabolism; UMP biosynthesis via de novo pathway; (S)-dihydroorotate from bicarbonate: step 2/3. In terms of biological role, catalyzes the condensation of carbamoyl phosphate and aspartate to form carbamoyl aspartate and inorganic phosphate, the committed step in the de novo pyrimidine nucleotide biosynthesis pathway. This chain is Aspartate carbamoyltransferase catalytic subunit, found in Bacillus cereus (strain ATCC 14579 / DSM 31 / CCUG 7414 / JCM 2152 / NBRC 15305 / NCIMB 9373 / NCTC 2599 / NRRL B-3711).